The sequence spans 512 residues: MNLSIMVQGTASDVGKSVLVAGLCRIFMQDGYRCAPFKSQNMALNSGITPQGEEMGRAQIFQAEAAGIAPDVRMNPVLLKPTSDRKAQVVLMGKVACNMDAVEYHQYKPQLQQQISEVYHSLAREYDVMVLEGAGSPAEINLRDRDIVNMGMAEMADAPVLLVADIDRGGVFASIYGTLALLHPHEKARVKGVIINKFRGDIALLTPGLEQIEALTNVPVLGVMPWLDIDLEDEDGVALQNGKYQDTAEKALDIAVIRLPHIANFTDFNALAAQPDVRLRYVSQLSALGQPDLIILPGSKNTLGDLQWLHHSGLAAALLTLHQRNVPVIGICGGYQMLGKRIIDGVESGLEQMDGLGLLDVETEFAPDKVTTRVSGYCQIGLPGILKNCCDHPLEGYEIHMGVSHLGSAAIPFAQLTLRNGQAEQWVDGAVNGDGSVLGSYIHGLFDSHHFTRALLDSLRQRKGLAAFDGVTVNYAEHKQQQFDILASQMREHIDIDRILKLMKQHQQERAQ.

Residues 251 to 451 form the GATase cobBQ-type domain; that stretch reads ALDIAVIRLP…IHGLFDSHHF (201 aa). Cysteine 332 (nucleophile) is an active-site residue. Histidine 443 is an active-site residue.

The protein belongs to the CobB/CobQ family. CobQ subfamily.

The protein operates within cofactor biosynthesis; adenosylcobalamin biosynthesis. Its function is as follows. Catalyzes amidations at positions B, D, E, and G on adenosylcobyrinic A,C-diamide. NH(2) groups are provided by glutamine, and one molecule of ATP is hydrogenolyzed for each amidation. This Yersinia enterocolitica serotype O:8 / biotype 1B (strain NCTC 13174 / 8081) protein is Cobyric acid synthase.